The sequence spans 258 residues: UPF0246 protein plu0566 (258 aa).

It belongs to the UPF0246 family.

The polypeptide is UPF0246 protein plu0566 (Photorhabdus laumondii subsp. laumondii (strain DSM 15139 / CIP 105565 / TT01) (Photorhabdus luminescens subsp. laumondii)).